The primary structure comprises 340 residues: GTP 3',8-cyclase (340 aa).

The Radical SAM core domain occupies K8 to D227. R17 provides a ligand contact to GTP. Residues C24 and C28 each coordinate [4Fe-4S] cluster. Position 30 (Y30) interacts with S-adenosyl-L-methionine. C31 is a [4Fe-4S] cluster binding site. R71 contacts GTP. Position 75 (G75) interacts with S-adenosyl-L-methionine. T102 is a GTP binding site. S126 provides a ligand contact to S-adenosyl-L-methionine. K163 contributes to the GTP binding site. M197 provides a ligand contact to S-adenosyl-L-methionine. C261 and C264 together coordinate [4Fe-4S] cluster. Position 266–268 (R266–R268) interacts with GTP. Residue C278 coordinates [4Fe-4S] cluster.

Belongs to the radical SAM superfamily. MoaA family. Monomer and homodimer. It depends on [4Fe-4S] cluster as a cofactor.

It carries out the reaction GTP + AH2 + S-adenosyl-L-methionine = (8S)-3',8-cyclo-7,8-dihydroguanosine 5'-triphosphate + 5'-deoxyadenosine + L-methionine + A + H(+). The protein operates within cofactor biosynthesis; molybdopterin biosynthesis. Functionally, catalyzes the cyclization of GTP to (8S)-3',8-cyclo-7,8-dihydroguanosine 5'-triphosphate. The sequence is that of GTP 3',8-cyclase from Staphylococcus aureus (strain Mu3 / ATCC 700698).